We begin with the raw amino-acid sequence, 215 residues long: FMN-dependent NADH:quinone oxidoreductase (215 aa).

FMN is bound at residue S17–S19.

The protein belongs to the azoreductase type 1 family. Homodimer. It depends on FMN as a cofactor.

It catalyses the reaction 2 a quinone + NADH + H(+) = 2 a 1,4-benzosemiquinone + NAD(+). The enzyme catalyses N,N-dimethyl-1,4-phenylenediamine + anthranilate + 2 NAD(+) = 2-(4-dimethylaminophenyl)diazenylbenzoate + 2 NADH + 2 H(+). Quinone reductase that provides resistance to thiol-specific stress caused by electrophilic quinones. Its function is as follows. Also exhibits azoreductase activity. Catalyzes the reductive cleavage of the azo bond in aromatic azo compounds to the corresponding amines. This chain is FMN-dependent NADH:quinone oxidoreductase, found in Clostridium botulinum (strain Alaska E43 / Type E3).